The chain runs to 2410 residues: Cell wall alpha-1,3-glucan synthase ags1 (2410 aa).

Residues serine 1643, serine 1644, and serine 1651 each carry the phosphoserine modification. Residue threonine 1653 is modified to Phosphothreonine. Residues 1685-1706 (SLSLGSRRGPGHTTEDDASDGL) are disordered. Phosphoserine is present on residues serine 1738 and serine 1812. The tract at residues 1796–1827 (QDDLSDPARSVDSDSVSPPLPPFVAGSNPNAR) is disordered. Residues 1802 to 1827 (PARSVDSDSVSPPLPPFVAGSNPNAR) are compositionally biased toward low complexity.

The protein belongs to the glycosyltransferase group 1 family. Interacts with sad1.

The enzyme catalyses [(1-&gt;3)-alpha-D-glucosyl](n) + UDP-alpha-D-glucose = [(1-&gt;3)-alpha-D-glucosyl](n+1) + UDP + H(+). Its function is as follows. Required for alpha-1,3-glucan and alpha-1,4-glucan production which are required for cell wall synthesis. In Schizosaccharomyces pombe (strain 972 / ATCC 24843) (Fission yeast), this protein is Cell wall alpha-1,3-glucan synthase ags1 (ags1).